Consider the following 257-residue polypeptide: S-methyl-5'-thioadenosine phosphorylase (257 aa).

Residues serine 10 and 50 to 51 (RH) each bind phosphate. Methionine 180 provides a ligand contact to substrate. Threonine 181 lines the phosphate pocket. Residue 204–206 (DYD) participates in substrate binding.

The protein belongs to the PNP/MTAP phosphorylase family. MTAP subfamily. As to quaternary structure, homohexamer. Dimer of a homotrimer.

It carries out the reaction S-methyl-5'-thioadenosine + phosphate = 5-(methylsulfanyl)-alpha-D-ribose 1-phosphate + adenine. It functions in the pathway amino-acid biosynthesis; L-methionine biosynthesis via salvage pathway; S-methyl-5-thio-alpha-D-ribose 1-phosphate from S-methyl-5'-thioadenosine (phosphorylase route): step 1/1. Its function is as follows. Catalyzes the reversible phosphorylation of S-methyl-5'-thioadenosine (MTA) to adenine and 5-methylthioribose-1-phosphate. Involved in the breakdown of MTA, a major by-product of polyamine biosynthesis. Responsible for the first step in the methionine salvage pathway after MTA has been generated from S-adenosylmethionine. Has broad substrate specificity with 6-aminopurine nucleosides as preferred substrates. This is S-methyl-5'-thioadenosine phosphorylase from Pyrococcus horikoshii (strain ATCC 700860 / DSM 12428 / JCM 9974 / NBRC 100139 / OT-3).